Reading from the N-terminus, the 378-residue chain is MMSIASGPSHAAYTWTAQGGGFGNQTVVDKVPPEMLHLVDAHWYQFPPMNPLWHAILGFVIGILGMISVIGNGMVIYIFTTTKSLRTPSNLLVINLAISDFLMMLSMSPAMVINCYYETWVLGPLVCELYGLTGSLFGCGSIWTMTMIAFDRYNVIVKGLSAKPMTINGALLRILGIWFFSLGWTIAPMFGWNRYVPEGNMTACGTDYLTKDLLSRSYILVYSFFCYFLPLFLIIYSYFFIIQAVAAHEKNMREQAKKMNVASLRSAENQSTSAECKLAKVALMTISLWFMAWTPYLVINYAGIFETVKINPLFTIWGSLFAKANAVYNPIVYGISHPKYRAALFQRFPSLACSSGPAGADTLSTTTTVTEGTEKPAA.

The Extracellular portion of the chain corresponds to 1 to 53; it reads MMSIASGPSHAAYTWTAQGGGFGNQTVVDKVPPEMLHLVDAHWYQFPPMNPLW. A glycan (N-linked (GlcNAc...) asparagine) is linked at Asn24. The chain crosses the membrane as a helical span at residues 54-78; it reads HAILGFVIGILGMISVIGNGMVIYI. Over 79 to 90 the chain is Cytoplasmic; sequence FTTTKSLRTPSN. Residues 91–115 traverse the membrane as a helical segment; the sequence is LLVINLAISDFLMMLSMSPAMVINC. Residues 116-130 lie on the Extracellular side of the membrane; the sequence is YYETWVLGPLVCELY. Cys127 and Cys204 are joined by a disulfide. The helical transmembrane segment at 131–150 threads the bilayer; it reads GLTGSLFGCGSIWTMTMIAF. Topologically, residues 151 to 169 are cytoplasmic; sequence DRYNVIVKGLSAKPMTING. Residues 170 to 193 form a helical membrane-spanning segment; it reads ALLRILGIWFFSLGWTIAPMFGWN. The Extracellular portion of the chain corresponds to 194–217; that stretch reads RYVPEGNMTACGTDYLTKDLLSRS. An N-linked (GlcNAc...) asparagine glycan is attached at Asn200. A helical transmembrane segment spans residues 218–245; that stretch reads YILVYSFFCYFLPLFLIIYSYFFIIQAV. Residues 246 to 280 lie on the Cytoplasmic side of the membrane; it reads AAHEKNMREQAKKMNVASLRSAENQSTSAECKLAK. The helical transmembrane segment at 281–304 threads the bilayer; it reads VALMTISLWFMAWTPYLVINYAGI. Over 305–311 the chain is Extracellular; sequence FETVKIN. A helical transmembrane segment spans residues 312–336; the sequence is PLFTIWGSLFAKANAVYNPIVYGIS. Lys323 is subject to N6-(retinylidene)lysine. Residues 337 to 378 are Cytoplasmic-facing; that stretch reads HPKYRAALFQRFPSLACSSGPAGADTLSTTTTVTEGTEKPAA. The segment at 356-378 is disordered; sequence GPAGADTLSTTTTVTEGTEKPAA. Residues 362-371 are compositionally biased toward low complexity; the sequence is TLSTTTTVTE.

Belongs to the G-protein coupled receptor 1 family. Opsin subfamily. In terms of processing, phosphorylated on some or all of the serine and threonine residues present in the C-terminal region.

It localises to the membrane. Functionally, visual pigments are the light-absorbing molecules that mediate vision. They consist of an apoprotein, opsin, covalently linked to cis-retinal. The chain is Rhodopsin from Cataglyphis bombycina (Saharan silver ant).